The sequence spans 379 residues: Chaperone protein DnaJ (379 aa).

A J domain is found at glutamate 5–glycine 69. The CR-type zinc-finger motif lies at glycine 141–alanine 223. Zn(2+) contacts are provided by cysteine 154, cysteine 157, cysteine 171, cysteine 174, cysteine 197, cysteine 200, and cysteine 214. CXXCXGXG motif repeat units follow at residues cysteine 154 to glycine 161, cysteine 171 to glycine 178, cysteine 197 to glycine 204, and serine 211 to glycine 218.

It belongs to the DnaJ family. In terms of assembly, homodimer. Zn(2+) serves as cofactor.

Its subcellular location is the cytoplasm. Participates actively in the response to hyperosmotic and heat shock by preventing the aggregation of stress-denatured proteins and by disaggregating proteins, also in an autonomous, DnaK-independent fashion. Unfolded proteins bind initially to DnaJ; upon interaction with the DnaJ-bound protein, DnaK hydrolyzes its bound ATP, resulting in the formation of a stable complex. GrpE releases ADP from DnaK; ATP binding to DnaK triggers the release of the substrate protein, thus completing the reaction cycle. Several rounds of ATP-dependent interactions between DnaJ, DnaK and GrpE are required for fully efficient folding. Also involved, together with DnaK and GrpE, in the DNA replication of plasmids through activation of initiation proteins. The protein is Chaperone protein DnaJ of Lactococcus lactis subsp. cremoris (Streptococcus cremoris).